The chain runs to 420 residues: Protein STB1 (420 aa).

Position 2 is an N-acetylserine (S2). The tract at residues 2–70 (SQPQMSPEKE…DEDHKTLLEA (69 aa)) is interaction with SWI6. S7 carries the post-translational modification Phosphoserine. Disordered stretches follow at residues 30-187 (QLKL…SDNT) and 273-319 (DSPS…ELNG). The span at 43–55 (RKQDSTTKKRSGE) shows a compositional bias: basic and acidic residues. At S72 the chain carries Phosphoserine. T99 is modified (phosphothreonine). S102 bears the Phosphoserine mark. The span at 106 to 122 (RKAEDRSQQIKPRKEDT) shows a compositional bias: basic and acidic residues. Residues 156–169 (NNNNSSNHSNNNNN) are compositionally biased toward low complexity. The segment covering 277–319 (LYLSNNNGSVQATLSPQQRRKPTTNTLHPPSNVPTTPSRELNG) has biased composition (polar residues). Position 419 is a phosphothreonine (T419).

As to quaternary structure, interacts with the ANK repeats of SWI6. The interaction with SWI6 is required for function. Interacts with SIN3. Phosphorylated by CDC28 in a cell cycle-dependent manner, inhibiting the interaction with SWI6.

It localises to the cytoplasm. It is found in the nucleus. In terms of biological role, involved in the regulation and timing of MBF-dependent transcription in late G1 of the cell cycle. The protein is Protein STB1 (STB1) of Saccharomyces cerevisiae (strain ATCC 204508 / S288c) (Baker's yeast).